The sequence spans 175 residues: ATP synthase subunit delta (175 aa).

The protein belongs to the ATPase delta chain family. As to quaternary structure, F-type ATPases have 2 components, F(1) - the catalytic core - and F(0) - the membrane proton channel. F(1) has five subunits: alpha(3), beta(3), gamma(1), delta(1), epsilon(1). F(0) has three main subunits: a(1), b(2) and c(10-14). The alpha and beta chains form an alternating ring which encloses part of the gamma chain. F(1) is attached to F(0) by a central stalk formed by the gamma and epsilon chains, while a peripheral stalk is formed by the delta and b chains.

The protein localises to the cell membrane. In terms of biological role, f(1)F(0) ATP synthase produces ATP from ADP in the presence of a proton or sodium gradient. F-type ATPases consist of two structural domains, F(1) containing the extramembraneous catalytic core and F(0) containing the membrane proton channel, linked together by a central stalk and a peripheral stalk. During catalysis, ATP synthesis in the catalytic domain of F(1) is coupled via a rotary mechanism of the central stalk subunits to proton translocation. This protein is part of the stalk that links CF(0) to CF(1). It either transmits conformational changes from CF(0) to CF(1) or is implicated in proton conduction. The polypeptide is ATP synthase subunit delta (Lactococcus lactis subsp. lactis (strain IL1403) (Streptococcus lactis)).